A 99-amino-acid chain; its full sequence is MSLTSTDIARIANLARLELKAAESERMLTQINGFFALVEKMRAVDTTGIEPLAHPVATVQDITLRLREDRVSEPNQREANQRNAPALEHGLFLVPKVIE.

The protein belongs to the GatC family. Heterotrimer of A, B and C subunits.

It catalyses the reaction L-glutamyl-tRNA(Gln) + L-glutamine + ATP + H2O = L-glutaminyl-tRNA(Gln) + L-glutamate + ADP + phosphate + H(+). The enzyme catalyses L-aspartyl-tRNA(Asn) + L-glutamine + ATP + H2O = L-asparaginyl-tRNA(Asn) + L-glutamate + ADP + phosphate + 2 H(+). In terms of biological role, allows the formation of correctly charged Asn-tRNA(Asn) or Gln-tRNA(Gln) through the transamidation of misacylated Asp-tRNA(Asn) or Glu-tRNA(Gln) in organisms which lack either or both of asparaginyl-tRNA or glutaminyl-tRNA synthetases. The reaction takes place in the presence of glutamine and ATP through an activated phospho-Asp-tRNA(Asn) or phospho-Glu-tRNA(Gln). This Albidiferax ferrireducens (strain ATCC BAA-621 / DSM 15236 / T118) (Rhodoferax ferrireducens) protein is Aspartyl/glutamyl-tRNA(Asn/Gln) amidotransferase subunit C.